A 61-amino-acid chain; its full sequence is UPF0434 protein Bfl377 (61 aa).

This sequence belongs to the UPF0434 family.

This Blochmanniella floridana protein is UPF0434 protein Bfl377.